A 218-amino-acid polypeptide reads, in one-letter code: External core antigen (218 aa).

The N-terminal stretch at 1-19 (MYLFHLCLVFACVPCPTFQ) is a signal peptide. The HBEAG stretch occupies residues 26-28 (GWL). The segment covering 180–211 (RRRGGARASRSPRRRTPSPRRRRSQSPRRRRS) has biased composition (basic residues). A disordered region spans residues 180–218 (RRRGGARASRSPRRRTPSPRRRRSQSPRRRRSQSPSANC). A 1; half-length repeat occupies 190–196 (SPRRRTP). Positions 190–212 (SPRRRTPSPRRRRSQSPRRRRSQ) are 3 X 8 AA repeats of S-P-R-R-R-R-S-Q. Positions 190–218 (SPRRRTPSPRRRRSQSPRRRRSQSPSANC) are excised as a propeptide. 2 repeat units span residues 197–204 (SPRRRRSQ) and 205–212 (SPRRRRSQ).

This sequence belongs to the orthohepadnavirus precore antigen family. Homodimerizes. Post-translationally, phosphorylated. In terms of processing, cleaved by host furin.

It is found in the secreted. The protein localises to the host nucleus. In terms of biological role, may regulate immune response to the intracellular capsid in acting as a T-cell tolerogen, by having an immunoregulatory effect which prevents destruction of infected cells by cytotoxic T-cells. This immune regulation may predispose to chronicity during perinatal infections and prevent severe liver injury during adult infections. This Marmota monax (Woodchuck) protein is External core antigen.